A 313-amino-acid chain; its full sequence is Secretory carrier-associated membrane protein 4 (313 aa).

The disordered stretch occupies residues 1-69; that stretch reads MAGRSRYDNP…LPPEPADFYN (69 aa). At 1–148 the chain is on the cytoplasmic side; it reads MAGRSRYDNP…EIPVHLQRTQ (148 aa). The stretch at 85 to 116 forms a coiled coil; that stretch reads MKTREKELLAKEAELNRREKEIKRREEAAARA. The next 4 helical transmembrane spans lie at 149-169, 181-201, 216-236, and 255-275; these read YVAFASLLGLVLCLFWNIICV, IWFLAVIYFILGCPGAYYLWY, FGWFFLFYLVHIAFCVYAAVS, and LIGNTVIVGVFYFLGFAMFCL. Over 276-313 the chain is Cytoplasmic; that stretch reads ESLLSMWVIQRVYLYFRGSGKEAEMKREAARSAARAAF.

The protein belongs to the SCAMP family.

The protein resides in the cell membrane. It localises to the cytoplasmic vesicle. The protein localises to the secretory vesicle membrane. Probably involved in membrane trafficking. This is Secretory carrier-associated membrane protein 4 (SCAMP4) from Oryza sativa subsp. japonica (Rice).